The sequence spans 314 residues: ATP synthase gamma chain (314 aa).

Belongs to the ATPase gamma chain family. F-type ATPases have 2 components, CF(1) - the catalytic core - and CF(0) - the membrane proton channel. CF(1) has five subunits: alpha(3), beta(3), gamma(1), delta(1), epsilon(1). CF(0) has three main subunits: a, b and c.

Its subcellular location is the cellular thylakoid membrane. In terms of biological role, produces ATP from ADP in the presence of a proton gradient across the membrane. The gamma chain is believed to be important in regulating ATPase activity and the flow of protons through the CF(0) complex. This is ATP synthase gamma chain from Synechococcus sp. (strain JA-2-3B'a(2-13)) (Cyanobacteria bacterium Yellowstone B-Prime).